The primary structure comprises 260 residues: HTH-type transcriptional activator FapR (260 aa).

One can recognise an HTH araC/xylS-type domain in the interval 154-251; it reads ERIVTLLFSD…GVTPKKFEIG (98 aa). DNA-binding regions (H-T-H motif) lie at residues 171–192 and 218–241; these read SDIA…EQEC and IGMI…KEYY.

Homodimer.

In terms of biological role, positive regulator of the expression of the 987P operon for the fimbrial protein in enterotoxigenic E.coli. This Escherichia coli protein is HTH-type transcriptional activator FapR.